Consider the following 285-residue polypeptide: tRNA-cytidine(32) 2-sulfurtransferase (285 aa).

The PP-loop motif signature appears at 48 to 53 (SGGKDS). Cys-122, Cys-125, and Cys-213 together coordinate [4Fe-4S] cluster.

The protein belongs to the TtcA family. As to quaternary structure, homodimer. The cofactor is Mg(2+). It depends on [4Fe-4S] cluster as a cofactor.

It localises to the cytoplasm. The enzyme catalyses cytidine(32) in tRNA + S-sulfanyl-L-cysteinyl-[cysteine desulfurase] + AH2 + ATP = 2-thiocytidine(32) in tRNA + L-cysteinyl-[cysteine desulfurase] + A + AMP + diphosphate + H(+). Its pathway is tRNA modification. Functionally, catalyzes the ATP-dependent 2-thiolation of cytidine in position 32 of tRNA, to form 2-thiocytidine (s(2)C32). The sulfur atoms are provided by the cysteine/cysteine desulfurase (IscS) system. In Cytophaga hutchinsonii (strain ATCC 33406 / DSM 1761 / CIP 103989 / NBRC 15051 / NCIMB 9469 / D465), this protein is tRNA-cytidine(32) 2-sulfurtransferase.